A 327-amino-acid polypeptide reads, in one-letter code: Urease accessory protein 4 (327 aa).

An N-linked (GlcNAc...) asparagine glycan is attached at Asn-120. Residues 239–259 (VYATVLIIGPHLTTLFSYLAY) form a helical membrane-spanning segment.

It belongs to the UreD family. URE4, URE6 and URE7 may form a complex that acts as a GTP-hydrolysis-dependent molecular chaperone, activating the urease apoprotein URE1.

Its subcellular location is the membrane. Urease accessory protein required for the maturation and activation of urease via the functional incorporation of the urease nickel metallocenter. Plays a role in host brain invasion. The polypeptide is Urease accessory protein 4 (Cryptococcus neoformans var. grubii serotype A (strain H99 / ATCC 208821 / CBS 10515 / FGSC 9487) (Filobasidiella neoformans var. grubii)).